The primary structure comprises 347 residues: Isopentenyl-diphosphate delta-isomerase (347 aa).

Residue 9 to 10 (RK) coordinates substrate. Residues 65–67 (AMT), serine 95, and asparagine 124 contribute to the FMN site. 95–97 (STH) contacts substrate. Glutamine 154 provides a ligand contact to substrate. Mg(2+) is bound at residue glutamate 155. FMN-binding positions include lysine 186, serine 211, threonine 216, 262–264 (GVR), and 283–284 (SR).

It belongs to the IPP isomerase type 2 family. Homooctamer. Dimer of tetramers. FMN serves as cofactor. Requires NADPH as cofactor. Mg(2+) is required as a cofactor.

The protein resides in the cytoplasm. It carries out the reaction isopentenyl diphosphate = dimethylallyl diphosphate. Functionally, involved in the biosynthesis of isoprenoids. Catalyzes the 1,3-allylic rearrangement of the homoallylic substrate isopentenyl (IPP) to its allylic isomer, dimethylallyl diphosphate (DMAPP). This chain is Isopentenyl-diphosphate delta-isomerase, found in Staphylococcus saprophyticus subsp. saprophyticus (strain ATCC 15305 / DSM 20229 / NCIMB 8711 / NCTC 7292 / S-41).